A 341-amino-acid polypeptide reads, in one-letter code: Gibberellin 2-beta-dioxygenase 2 (341 aa).

The region spanning 179-283 is the Fe2OG dioxygenase domain; the sequence is KSDSCLRLNH…RISMIYFGGP (105 aa). The Fe cation site is built by His207, Asp209, and His264. Arg274 is a catalytic residue. Arg274 is a binding site for 2-oxoglutarate.

This sequence belongs to the iron/ascorbate-dependent oxidoreductase family. GA2OX subfamily. Fe(2+) serves as cofactor. In terms of tissue distribution, preferentially expressed in flowers, siliques, and upper stems. Expressed in cotyledons, at the base of the shoot apical meristem and developing leaf primordia.

The enzyme catalyses gibberellin A1 + 2-oxoglutarate + O2 = gibberellin A8 + succinate + CO2. The protein operates within plant hormone biosynthesis; gibberellin biosynthesis. Its function is as follows. Catalyzes the 2-beta-hydroxylation of several biologically active gibberellins, leading to the homeostatic regulation of their endogenous level. Catabolism of gibberellins (GAs) plays a central role in plant development. Converts GA9/GA20 to GA51/GA29 and GA4/GA1 to GA34/GA8. This Arabidopsis thaliana (Mouse-ear cress) protein is Gibberellin 2-beta-dioxygenase 2 (GA2OX2).